The sequence spans 141 residues: Hemoglobin subunit alpha-D (141 aa).

The Globin domain maps to 1–141; the sequence is MLTADDKKLI…VAAVLAEKYR (141 aa). His58 and His87 together coordinate heme b.

This sequence belongs to the globin family. Heterotetramer of two alpha-D chains and two beta chains. In terms of tissue distribution, red blood cells.

Involved in oxygen transport from the lung to the various peripheral tissues. The protein is Hemoglobin subunit alpha-D (HBAD) of Aegypius monachus (Cinereous vulture).